The primary structure comprises 78 residues: Acyl carrier protein (78 aa).

Residues 2 to 77 (SDIAERVKKI…DAIKFLEKNA (76 aa)) form the Carrier domain. O-(pantetheine 4'-phosphoryl)serine is present on Ser-37.

It belongs to the acyl carrier protein (ACP) family. In terms of processing, 4'-phosphopantetheine is transferred from CoA to a specific serine of apo-ACP by AcpS. This modification is essential for activity because fatty acids are bound in thioester linkage to the sulfhydryl of the prosthetic group.

Its subcellular location is the cytoplasm. Its pathway is lipid metabolism; fatty acid biosynthesis. Carrier of the growing fatty acid chain in fatty acid biosynthesis. In Azorhizobium caulinodans (strain ATCC 43989 / DSM 5975 / JCM 20966 / LMG 6465 / NBRC 14845 / NCIMB 13405 / ORS 571), this protein is Acyl carrier protein.